Consider the following 266-residue polypeptide: Type II iodothyronine deiodinase (266 aa).

Over 1-13 (MGSASEDLLVTLQ) the chain is Lumenal. A helical; Signal-anchor for type III membrane protein membrane pass occupies residues 14-34 (ILPGFFSNCLFLALYDSVVLV). Over 35 to 266 (KRVVALLSRS…QWLELSYGRR (232 aa)) the chain is Cytoplasmic. Sec-134 is an active-site residue. Residue Sec-134 is a non-standard amino acid, selenocysteine.

The protein belongs to the iodothyronine deiodinase family. In terms of assembly, predominantly monomer. Can form homodimers but homodimerization is not essential for enzyme activity.

The protein localises to the endoplasmic reticulum membrane. It carries out the reaction 3,3',5-triiodo-L-thyronine + iodide + A + H(+) = L-thyroxine + AH2. It catalyses the reaction 3,3'-diiodo-L-thyronine + iodide + A + H(+) = 3,3',5'-triiodo-L-thyronine + AH2. The enzyme catalyses 3'-iodo-L-thyronine + iodide + A + H(+) = 3',5'-diiodo-L-thyronine + AH2. Not inhibited by N(6)-propylthiouracil. Plays a crucial role in the metabolism of thyroid hormones (TH) and has specific roles in TH activation and inactivation by deiodination. Catalyzes the conversion of T4 (L-thyroxine/3,5,3',5'-tetraiodothyronine) to T3 (3,5,3'-triiodothyronine) and rT3 (3,3',5'-triiodothyronine) to T2 (3,3'-diiodothyronine) via outer-ring deiodination (ORD). Catalyzes the conversion 3',5'-T2 (3,5-diiodothyronine) to 3-T1 (3-monoiodothyronine) via ORD. The sequence is that of Type II iodothyronine deiodinase (dio2) from Fundulus heteroclitus (Killifish).